The primary structure comprises 194 residues: ATP-dependent Clp protease proteolytic subunit (194 aa).

Ser98 serves as the catalytic Nucleophile. Residue His123 is part of the active site.

Belongs to the peptidase S14 family. In terms of assembly, fourteen ClpP subunits assemble into 2 heptameric rings which stack back to back to give a disk-like structure with a central cavity, resembling the structure of eukaryotic proteasomes.

It is found in the cytoplasm. It catalyses the reaction Hydrolysis of proteins to small peptides in the presence of ATP and magnesium. alpha-casein is the usual test substrate. In the absence of ATP, only oligopeptides shorter than five residues are hydrolyzed (such as succinyl-Leu-Tyr-|-NHMec, and Leu-Tyr-Leu-|-Tyr-Trp, in which cleavage of the -Tyr-|-Leu- and -Tyr-|-Trp bonds also occurs).. Functionally, cleaves peptides in various proteins in a process that requires ATP hydrolysis. Has a chymotrypsin-like activity. Plays a major role in the degradation of misfolded proteins. This chain is ATP-dependent Clp protease proteolytic subunit, found in Clostridium tetani (strain Massachusetts / E88).